Here is a 318-residue protein sequence, read N- to C-terminus: Protein-L-histidine N-pros-methyltransferase (318 aa).

An N-terminal signal peptide occupies residues 1-18 (MRLLAGWLCLSLASVWLA). N-linked (GlcNAc...) asparagine glycosylation occurs at N35. The S-adenosyl-L-homocysteine site is built by E174, N210, and Y295.

It belongs to the METTL9 family. In terms of tissue distribution, expressed in liver, colon, small intestine, skin, kidney and to a lesser extent in spleen, lung, thymus and stomach. Not detected in fibroblast and endothelial cells.

Its subcellular location is the endoplasmic reticulum. The protein resides in the mitochondrion. The catalysed reaction is L-histidyl-[protein] + S-adenosyl-L-methionine = N(pros)-methyl-L-histidyl-[protein] + S-adenosyl-L-homocysteine + H(+). Protein-histidine N-methyltransferase that specifically catalyzes 1-methylhistidine (pros-methylhistidine) methylation of target proteins. Specifically methylates the second His of proteins with a His-x-His (HxH) motif (where 'x' is preferably a small amino acid), while exploiting the first one as a recognition signature. Catalyzes methylation of target proteins such as S100A9, NDUFB3, SLC39A5, SLC39A7, ARMC6 and DNAJB12; 1-methylhistidine modification may affect the binding of zinc and other metals to its target proteins. Constitutes the main methyltransferase for the 1-methylhistidine modification in cell. This chain is Protein-L-histidine N-pros-methyltransferase, found in Mus musculus (Mouse).